We begin with the raw amino-acid sequence, 402 residues long: Phosphoglycerate kinase (402 aa).

Substrate contacts are provided by residues 24–26 (DFN), arginine 40, 63–66 (HFGR), arginine 122, and arginine 155. ATP contacts are provided by residues lysine 206, glycine 297, glutamate 328, and 358 to 361 (GGDS).

The protein belongs to the phosphoglycerate kinase family. As to quaternary structure, monomer.

The protein localises to the cytoplasm. It carries out the reaction (2R)-3-phosphoglycerate + ATP = (2R)-3-phospho-glyceroyl phosphate + ADP. It functions in the pathway carbohydrate degradation; glycolysis; pyruvate from D-glyceraldehyde 3-phosphate: step 2/5. The chain is Phosphoglycerate kinase from Prochlorococcus marinus (strain MIT 9312).